Here is a 469-residue protein sequence, read N- to C-terminus: Probable lysophospholipase BODYGUARD 1 (469 aa).

Positions 1 to 45 (MGFSRSLNRTVGVFVFFILDIVDFLLCFTYKTLDFFFESEWKPCY) are cleaved as a signal peptide. Cys46 is lipidated: N-palmitoyl cysteine. The 255-residue stretch at 185 to 439 (VVFIHGFLSS…IHVVPDKDHI (255 aa)) folds into the AB hydrolase-1 domain. Residue His189 is part of the active site. Catalysis depends on Ser263, which acts as the Nucleophile. Catalysis depends on charge relay system residues Asp410 and His438.

As to expression, expressed exclusively in protodermal and epidermal cells of all organs, especially on adaxial sides.

It localises to the cell membrane. It is found in the secreted. Its subcellular location is the cell wall. In terms of biological role, controls cuticle development and morphogenesis, by promoting cutin and suberin monomers loading. Involved in the regulation of abscissic acid (ABA) biosynthesis in response to osmotic stress. Plays an important role in osmotic stress and drought resistance. Required to ensure a reduced permeability of aerial tissue, thus preventing transpiration. Regulates lateral root hair development. Functionally, required for infection by the pathogenic necrotrophic fungus Botrytis cinerea, probably by regulating structural traits of the cuticle. This Arabidopsis thaliana (Mouse-ear cress) protein is Probable lysophospholipase BODYGUARD 1.